We begin with the raw amino-acid sequence, 521 residues long: Probable tRNA (uracil-O(2)-)-methyltransferase (521 aa).

It belongs to the TRM44 family.

It localises to the cytoplasm. The catalysed reaction is uridine(44) in tRNA(Ser) + S-adenosyl-L-methionine = 2'-O-methyluridine(44) in tRNA(Ser) + S-adenosyl-L-homocysteine + H(+). Probable adenosyl-L-methionine (AdoMet)-dependent tRNA (uracil-O(2)-)-methyltransferase. This is Probable tRNA (uracil-O(2)-)-methyltransferase (trmt44) from Drosophila melanogaster (Fruit fly).